A 565-amino-acid polypeptide reads, in one-letter code: Adenine deaminase 1 (565 aa).

The protein belongs to the metallo-dependent hydrolases superfamily. Adenine deaminase family. Mn(2+) is required as a cofactor.

It catalyses the reaction adenine + H2O + H(+) = hypoxanthine + NH4(+). This Rhizobium etli (strain ATCC 51251 / DSM 11541 / JCM 21823 / NBRC 15573 / CFN 42) protein is Adenine deaminase 1.